We begin with the raw amino-acid sequence, 466 residues long: Cysteine--tRNA ligase (466 aa).

C28 contacts Zn(2+). The 'HIGH' region signature appears at 30–40; that stretch reads PTVYNFFHIGN. Positions 208, 233, and 237 each coordinate Zn(2+). Positions 265 to 269 match the 'KMSKS' region motif; sequence KMSKS. K268 is an ATP binding site.

This sequence belongs to the class-I aminoacyl-tRNA synthetase family. As to quaternary structure, monomer. Requires Zn(2+) as cofactor.

It is found in the cytoplasm. It catalyses the reaction tRNA(Cys) + L-cysteine + ATP = L-cysteinyl-tRNA(Cys) + AMP + diphosphate. In Clostridium perfringens (strain SM101 / Type A), this protein is Cysteine--tRNA ligase.